The chain runs to 393 residues: Staphopain B (393 aa).

Residues 1–36 form the signal peptide; it reads MNSSCKSRVFNIISIIMVSMLILSLGAFANNNKAKA. A propeptide spanning residues 37-219 is cleaved from the precursor; the sequence is DSHSKQLEIN…KVEENEAIQE (183 aa). Active-site residues include Cys243, His340, and Asn360.

Belongs to the peptidase C47 family. As to quaternary structure, in the cytoplasm, prematurely activated/folded SspB forms a stable non-covalent complex with SspC. In terms of processing, proteolytically cleaved by staphylococcal serine protease (SspA).

It localises to the secreted. Its activity is regulated as follows. Prematurely activated/folded staphopain B is inhibited by staphostatin B (SspC), which is probably required to protect staphylococcal cytoplasmic proteins from degradation by SspB. Also inactivated by E-64 and stimulated by EDTA. Functionally, cysteine protease that plays an important role in the inhibition of host innate immune response. Degrades host elastin, fibrogen, fibronectin and kininogen. Blocks phagocytosis of opsonised S.aureus by neutrophils and monocytes by inducing their death in a proteolytic activity-dependent manner. Decreases surface expression of the 'don't eat me' signal CD31 on neutrophils. Cleaves host galectin-3/LGALS3, thereby inhibiting the neutrophil-activating ability of the lectin. The protein is Staphopain B (sspB) of Staphylococcus aureus (strain NCTC 8325 / PS 47).